The chain runs to 123 residues: rRNA-processing protein cgr-1 (123 aa).

The span at 1-13 (MSSTTTTTQTTSQ) shows a compositional bias: low complexity. 2 disordered regions span residues 1-47 (MSST…GLTS) and 85-123 (EKRA…LINS). Residues 49–110 (EKRAKERQLL…EKMHKKRVER (62 aa)) are a coiled coil. Positions 85-102 (EKRAKKEEKERYEKMAEK) are enriched in basic and acidic residues. Over residues 103–123 (MHKKRVERLKRKEKRNKLINS) the composition is skewed to basic residues.

It belongs to the CGR1 family.

It localises to the nucleus. Its subcellular location is the nucleolus. Its function is as follows. Involved in nucleolar integrity and required for processing of the pre-rRNA for the 60S ribosome subunit. In Neurospora crassa (strain ATCC 24698 / 74-OR23-1A / CBS 708.71 / DSM 1257 / FGSC 987), this protein is rRNA-processing protein cgr-1 (cgr-1).